A 226-amino-acid polypeptide reads, in one-letter code: N-(5'-phosphoribosyl)anthranilate isomerase 2 (226 aa).

The protein belongs to the TrpF family.

The catalysed reaction is N-(5-phospho-beta-D-ribosyl)anthranilate = 1-(2-carboxyphenylamino)-1-deoxy-D-ribulose 5-phosphate. It participates in amino-acid biosynthesis; L-tryptophan biosynthesis; L-tryptophan from chorismate: step 3/5. The polypeptide is N-(5'-phosphoribosyl)anthranilate isomerase 2 (trpF2) (Methanosarcina mazei (strain ATCC BAA-159 / DSM 3647 / Goe1 / Go1 / JCM 11833 / OCM 88) (Methanosarcina frisia)).